Here is a 210-residue protein sequence, read N- to C-terminus: Putative Dihydrofolate reductase (210 aa).

The region spanning 4–184 is the DHFR domain; it reads TLYCVVAVDT…IFYMFETYIK (181 aa).

Belongs to the dihydrofolate reductase family.

It catalyses the reaction (6S)-5,6,7,8-tetrahydrofolate + NADP(+) = 7,8-dihydrofolate + NADPH + H(+). The sequence is that of Putative Dihydrofolate reductase (ORF2) from Human herpesvirus 8 type P (isolate GK18) (HHV-8).